Reading from the N-terminus, the 176-residue chain is Lactoylglutathione lyase (176 aa).

The 145-residue stretch at 23–167 (VFNHTMLRVK…DGYWVEIVQA (145 aa)) folds into the VOC domain. Residue His-26 coordinates Ni(2+). Arg-30 is a binding site for substrate. A Ni(2+)-binding site is contributed by Glu-92. Substrate is bound by residues Asn-96, Arg-114, and His-118. Positions 118 and 163 each coordinate Ni(2+). The active-site Proton donor/acceptor is the Glu-163.

Belongs to the glyoxalase I family. As to quaternary structure, monomer. Ni(2+) serves as cofactor. The cofactor is Zn(2+).

The enzyme catalyses (R)-S-lactoylglutathione = methylglyoxal + glutathione. It participates in secondary metabolite metabolism; methylglyoxal degradation; (R)-lactate from methylglyoxal: step 1/2. Functionally, catalyzes the conversion of hemimercaptal, formed from methylglyoxal and glutathione, to S-lactoylglutathione. The sequence is that of Lactoylglutathione lyase (gloA) from Pseudomonas aeruginosa (strain ATCC 15692 / DSM 22644 / CIP 104116 / JCM 14847 / LMG 12228 / 1C / PRS 101 / PAO1).